We begin with the raw amino-acid sequence, 834 residues long: Ras GTPase-activating protein 3 (834 aa).

C2 domains are found at residues 1-112 (MAVE…DTWF) and 123-263 (VQGK…EAWY). Ala-2 carries the N-acetylalanine modification. Phosphotyrosine is present on Tyr-66. Ser-77 carries the post-translational modification Phosphoserine. Thr-110 is modified (phosphothreonine). Positions 346-561 (GRVVPFISAI…DAVKNFLDLI (216 aa)) constitute a Ras-GAP domain. The PH domain maps to 576–677 (ILLKEGFMIK…WIDILTKVSQ (102 aa)). A Btk-type zinc finger spans residues 679-715 (NQKRLTVFHPSAYLNGHWLCCRASSDTAAGCTPCTGG). Residues His-687, Cys-698, Cys-699, and Cys-709 each contribute to the Zn(2+) site. Ser-809 and Ser-833 each carry phosphoserine.

In terms of tissue distribution, high levels in brain, lower in spleen and lung.

Inhibitory regulator of the Ras-cyclic AMP pathway. May bind inositol tetrakisphosphate (IP4). This is Ras GTPase-activating protein 3 (Rasa3) from Mus musculus (Mouse).